A 407-amino-acid chain; its full sequence is Na(+)-translocating NADH-quinone reductase subunit F (407 aa).

Residues 3–23 (IILGVVMFTLIVLVLSGLILA) form a helical membrane-spanning segment. The 2Fe-2S ferredoxin-type domain occupies 32–126 (GDVVIEINNE…NMKIELPEEI (95 aa)). Cys-69, Cys-75, Cys-78, and Cys-110 together coordinate [2Fe-2S] cluster. The 141-residue stretch at 129-269 (VKKWECEVIS…SGPFGEFFAK (141 aa)) folds into the FAD-binding FR-type domain.

Belongs to the NqrF family. As to quaternary structure, composed of six subunits; NqrA, NqrB, NqrC, NqrD, NqrE and NqrF. It depends on [2Fe-2S] cluster as a cofactor. Requires FAD as cofactor.

Its subcellular location is the cell inner membrane. It carries out the reaction a ubiquinone + n Na(+)(in) + NADH + H(+) = a ubiquinol + n Na(+)(out) + NAD(+). Its function is as follows. NQR complex catalyzes the reduction of ubiquinone-1 to ubiquinol by two successive reactions, coupled with the transport of Na(+) ions from the cytoplasm to the periplasm. The first step is catalyzed by NqrF, which accepts electrons from NADH and reduces ubiquinone-1 to ubisemiquinone by a one-electron transfer pathway. This is Na(+)-translocating NADH-quinone reductase subunit F from Klebsiella pneumoniae subsp. pneumoniae (strain ATCC 700721 / MGH 78578).